A 179-amino-acid polypeptide reads, in one-letter code: Large ribosomal subunit protein uL5 (179 aa).

This sequence belongs to the universal ribosomal protein uL5 family. Part of the 50S ribosomal subunit; part of the 5S rRNA/L5/L18/L25 subcomplex. Contacts the 5S rRNA and the P site tRNA. Forms a bridge to the 30S subunit in the 70S ribosome.

This is one of the proteins that bind and probably mediate the attachment of the 5S RNA into the large ribosomal subunit, where it forms part of the central protuberance. In the 70S ribosome it contacts protein S13 of the 30S subunit (bridge B1b), connecting the 2 subunits; this bridge is implicated in subunit movement. Contacts the P site tRNA; the 5S rRNA and some of its associated proteins might help stabilize positioning of ribosome-bound tRNAs. This Delftia acidovorans (strain DSM 14801 / SPH-1) protein is Large ribosomal subunit protein uL5.